The chain runs to 282 residues: Elongation factor Ts (282 aa).

The interval Thr80–Val83 is involved in Mg(2+) ion dislocation from EF-Tu.

This sequence belongs to the EF-Ts family.

Its subcellular location is the cytoplasm. Its function is as follows. Associates with the EF-Tu.GDP complex and induces the exchange of GDP to GTP. It remains bound to the aminoacyl-tRNA.EF-Tu.GTP complex up to the GTP hydrolysis stage on the ribosome. This is Elongation factor Ts (tsf) from Pasteurella multocida (strain Pm70).